We begin with the raw amino-acid sequence, 366 residues long: Flagellar P-ring protein (366 aa).

The first 24 residues, 1-24 (MWPLLLAVALSTLLPLAMPGSAGA), serve as a signal peptide directing secretion.

Belongs to the FlgI family. The basal body constitutes a major portion of the flagellar organelle and consists of four rings (L,P,S, and M) mounted on a central rod.

It localises to the periplasm. The protein resides in the bacterial flagellum basal body. In terms of biological role, assembles around the rod to form the L-ring and probably protects the motor/basal body from shearing forces during rotation. In Nitratidesulfovibrio vulgaris (strain ATCC 29579 / DSM 644 / CCUG 34227 / NCIMB 8303 / VKM B-1760 / Hildenborough) (Desulfovibrio vulgaris), this protein is Flagellar P-ring protein.